The chain runs to 98 residues: Co-chaperonin GroES (98 aa).

The protein belongs to the GroES chaperonin family. In terms of assembly, heptamer of 7 subunits arranged in a ring. Interacts with the chaperonin GroEL.

It is found in the cytoplasm. In terms of biological role, together with the chaperonin GroEL, plays an essential role in assisting protein folding. The GroEL-GroES system forms a nano-cage that allows encapsulation of the non-native substrate proteins and provides a physical environment optimized to promote and accelerate protein folding. GroES binds to the apical surface of the GroEL ring, thereby capping the opening of the GroEL channel. The protein is Co-chaperonin GroES of Corynebacterium diphtheriae (strain ATCC 700971 / NCTC 13129 / Biotype gravis).